A 462-amino-acid polypeptide reads, in one-letter code: Lysyl endopeptidase (462 aa).

The N-terminal stretch at 1–24 (MHKRTYLNACLVLALAAGASQALA) is a signal peptide. The propeptide occupies 25-211 (APGASEMAGD…VSYFADSLYK (187 aa)). Disulfide bonds link cysteine 224–cysteine 435, cysteine 230–cysteine 305, and cysteine 262–cysteine 284. Residues histidine 283, aspartate 333, and serine 409 each act as charge relay system in the active site.

This sequence belongs to the peptidase S1 family. In terms of processing, experiments performed in E.coli. Processing of pro-endopeptidase to mature endopeptidase is probably autocatalytic, as mutations in the probable active site residues prevent processing, and purified inactive pro-endopeptidase disappears in the presence of active endopeptidase.

It is found in the secreted. The catalysed reaction is Preferential cleavage: Lys-|-Xaa, including Lys-|-Pro.. Its function is as follows. Lysine-specific endoprotease. Involved in corneal virulence. The polypeptide is Lysyl endopeptidase (prpL) (Pseudomonas aeruginosa (strain ATCC 15692 / DSM 22644 / CIP 104116 / JCM 14847 / LMG 12228 / 1C / PRS 101 / PAO1)).